We begin with the raw amino-acid sequence, 784 residues long: 5-methyltetrahydropteroyltriglutamate--homocysteine methyltransferase (784 aa).

Residues 16-19 (RELK) and Lys-112 each bind 5-methyltetrahydropteroyltri-L-glutamate. L-homocysteine contacts are provided by residues 460 to 462 (IGS) and Glu-513. Residues 460–462 (IGS) and Glu-513 each bind L-methionine. 5-methyltetrahydropteroyltri-L-glutamate is bound at residue Trp-590. Position 628 (Asp-628) interacts with L-homocysteine. Residue Asp-628 participates in L-methionine binding. Residue Glu-634 coordinates 5-methyltetrahydropteroyltri-L-glutamate. Zn(2+) contacts are provided by His-670, Cys-672, and Glu-694. Residue His-723 is the Proton donor of the active site. Cys-755 is a Zn(2+) binding site.

This sequence belongs to the vitamin-B12 independent methionine synthase family. Requires Zn(2+) as cofactor.

It catalyses the reaction 5-methyltetrahydropteroyltri-L-glutamate + L-homocysteine = tetrahydropteroyltri-L-glutamate + L-methionine. It participates in amino-acid biosynthesis; L-methionine biosynthesis via de novo pathway; L-methionine from L-homocysteine (MetE route): step 1/1. In terms of biological role, catalyzes the transfer of a methyl group from 5-methyltetrahydrofolate to homocysteine resulting in methionine formation. In Acidithiobacillus ferrooxidans (strain ATCC 23270 / DSM 14882 / CIP 104768 / NCIMB 8455) (Ferrobacillus ferrooxidans (strain ATCC 23270)), this protein is 5-methyltetrahydropteroyltriglutamate--homocysteine methyltransferase.